The following is a 246-amino-acid chain: Uridylate kinase (246 aa).

19–22 (KISG) serves as a coordination point for ATP. Position 61 (G61) interacts with UMP. 2 residues coordinate ATP: G62 and R66. UMP is bound by residues D81 and 142-149 (TGNPFFTT). 4 residues coordinate ATP: T169, Q170, Y175, and D178.

It belongs to the UMP kinase family. Homohexamer.

It is found in the cytoplasm. It carries out the reaction UMP + ATP = UDP + ADP. Its pathway is pyrimidine metabolism; CTP biosynthesis via de novo pathway; UDP from UMP (UMPK route): step 1/1. Inhibited by UTP. In terms of biological role, catalyzes the reversible phosphorylation of UMP to UDP. The protein is Uridylate kinase of Wolbachia sp. subsp. Brugia malayi (strain TRS).